The chain runs to 283 residues: Pantothenate synthetase (283 aa).

30 to 37 (MGNLHDGH) contributes to the ATP binding site. Residue His37 is the Proton donor of the active site. Residue Gln61 participates in (R)-pantoate binding. Residue Gln61 participates in beta-alanine binding. 149–152 (GEKD) provides a ligand contact to ATP. Gln155 lines the (R)-pantoate pocket. 186-189 (LSSR) contacts ATP.

The protein belongs to the pantothenate synthetase family. Homodimer.

Its subcellular location is the cytoplasm. It carries out the reaction (R)-pantoate + beta-alanine + ATP = (R)-pantothenate + AMP + diphosphate + H(+). It functions in the pathway cofactor biosynthesis; (R)-pantothenate biosynthesis; (R)-pantothenate from (R)-pantoate and beta-alanine: step 1/1. In terms of biological role, catalyzes the condensation of pantoate with beta-alanine in an ATP-dependent reaction via a pantoyl-adenylate intermediate. The sequence is that of Pantothenate synthetase from Escherichia coli O6:K15:H31 (strain 536 / UPEC).